Consider the following 485-residue polypeptide: Aldehyde dehydrogenase family 3 member A2 (485 aa).

Residues 1 to 463 lie on the Cytoplasmic side of the membrane; that stretch reads MEREVQRVRQ…FLLRRFNKEK (463 aa). An NAD(+)-binding site is contributed by 185–190; it reads GNTAVG. Active-site residues include Glu207 and Cys241. At Ser293 the chain carries Phosphoserine. Residues 464–484 traverse the membrane as a helical segment; that stretch reads LGLLVLTFLGIVAAVLVNAGY. The Prevents secretion from ER signature appears at 481–484; it reads NAGY.

The protein belongs to the aldehyde dehydrogenase family. As to quaternary structure, homodimer.

The protein resides in the microsome membrane. It localises to the endoplasmic reticulum membrane. The catalysed reaction is an aldehyde + NAD(+) + H2O = a carboxylate + NADH + 2 H(+). It carries out the reaction a fatty aldehyde + NAD(+) + H2O = a fatty acid + NADH + 2 H(+). The enzyme catalyses (2E)-hexadecenal + NAD(+) + H2O = (E)-hexadec-2-enoate + NADH + 2 H(+). It catalyses the reaction hexadecanoate + NADH + 2 H(+) = hexadecanal + NAD(+) + H2O. The catalysed reaction is 22-oxodocosanoate + NAD(+) + H2O = docosanedioate + NADH + 2 H(+). It carries out the reaction 2,6,10,14-tetramethylpentadecanal + NAD(+) + H2O = 2,6,10,14-tetramethylpentadecanoate + NADH + 2 H(+). The enzyme catalyses octadecanal + NAD(+) + H2O = octadecanoate + NADH + 2 H(+). It catalyses the reaction dodecanoate + NADH + 2 H(+) = dodecanal + NAD(+) + H2O. The catalysed reaction is decanal + NAD(+) + H2O = decanoate + NADH + 2 H(+). It carries out the reaction tetradecanal + NAD(+) + H2O = tetradecanoate + NADH + 2 H(+). The enzyme catalyses octanal + NAD(+) + H2O = octanoate + NADH + 2 H(+). It catalyses the reaction heptanal + NAD(+) + H2O = heptanoate + NADH + 2 H(+). The catalysed reaction is (2E,6E)-farnesal + NAD(+) + H2O = (2E,6E)-farnesoate + NADH + 2 H(+). Catalyzes the oxidation of medium and long-chain aliphatic aldehydes to fatty acids. Active on a variety of saturated and unsaturated aliphatic aldehydes between 6 and 24 carbons in length. Responsible for conversion of the sphingosine 1-phosphate (S1P) degradation product hexadecenal to hexadecenoic acid. This chain is Aldehyde dehydrogenase family 3 member A2 (ALDH3A2), found in Macaca fascicularis (Crab-eating macaque).